Here is a 305-residue protein sequence, read N- to C-terminus: UDP-3-O-acyl-N-acetylglucosamine deacetylase (305 aa).

Positions 79, 238, and 242 each coordinate Zn(2+). His265 (proton donor) is an active-site residue.

It belongs to the LpxC family. Requires Zn(2+) as cofactor.

The enzyme catalyses a UDP-3-O-[(3R)-3-hydroxyacyl]-N-acetyl-alpha-D-glucosamine + H2O = a UDP-3-O-[(3R)-3-hydroxyacyl]-alpha-D-glucosamine + acetate. It functions in the pathway glycolipid biosynthesis; lipid IV(A) biosynthesis; lipid IV(A) from (3R)-3-hydroxytetradecanoyl-[acyl-carrier-protein] and UDP-N-acetyl-alpha-D-glucosamine: step 2/6. Its function is as follows. Catalyzes the hydrolysis of UDP-3-O-myristoyl-N-acetylglucosamine to form UDP-3-O-myristoylglucosamine and acetate, the committed step in lipid A biosynthesis. The sequence is that of UDP-3-O-acyl-N-acetylglucosamine deacetylase from Vibrio atlanticus (strain LGP32) (Vibrio splendidus (strain Mel32)).